The sequence spans 348 residues: Chitinase (348 aa).

Residues 1 to 29 form the signal peptide; sequence MKLKKIIPAFPLLSTVAVGLWLTPTQASA. The GH18 domain maps to 42 to 348; the sequence is KVLVGYWHNW…FATRYSNLVK (307 aa). Glutamate 161 serves as the catalytic Proton donor.

This sequence belongs to the glycosyl hydrolase 18 family.

It localises to the secreted. The catalysed reaction is Random endo-hydrolysis of N-acetyl-beta-D-glucosaminide (1-&gt;4)-beta-linkages in chitin and chitodextrins.. It participates in glycan degradation; chitin degradation. In terms of biological role, involved in chitin degradation. Catalyzes the cleavage of glycosidic linkages in chitooligosaccharides and in alpha- and beta-chitin. Its activity on chitooligosaccharides increases considerably with degrees of polymerization (the initial rate of hydrolysis for GlcNAc5 is about 130-fold higher than that for GlcNAc3). Its activity is greatly stimulated in the presence of the lytic chitin monooxygenase EfCBM33A, which attacks the crystalline structure of chitin and makes the polymer more accessible to the chitinase; combining the two enzymes leads to rapid and complete depolymerization of crystalline chitin, especially with beta-chitin as a substrate. Is likely involved in a chitin degradation pathway that allows E.faecalis V583 to grow on chitin as a carbon source. The protein is Chitinase of Enterococcus faecalis (strain ATCC 700802 / V583).